We begin with the raw amino-acid sequence, 163 residues long: Ribonuclease P protein subunit p25-like protein (163 aa).

Disordered stretches follow at residues 1–22 and 129–163; these read MEHY…PQLP and NEYG…DTRF. Positions 154–163 are enriched in basic residues; the sequence is PRRRARDTRF.

Belongs to the histone-like Alba family.

It is found in the nucleus. May be a component of ribonuclease P or MRP. In Bos taurus (Bovine), this protein is Ribonuclease P protein subunit p25-like protein (RPP25L).